Reading from the N-terminus, the 831-residue chain is Leucine--tRNA ligase (831 aa).

A 'HIGH' region motif is present at residues 35–45 (PYPSGKIHVGH). Residues 600–604 (KMSKS) carry the 'KMSKS' region motif. Position 603 (lysine 603) interacts with ATP.

This sequence belongs to the class-I aminoacyl-tRNA synthetase family.

The protein localises to the cytoplasm. The enzyme catalyses tRNA(Leu) + L-leucine + ATP = L-leucyl-tRNA(Leu) + AMP + diphosphate. The protein is Leucine--tRNA ligase of Rickettsia bellii (strain RML369-C).